The chain runs to 342 residues: MQAWIQQGLHGMQMGGRVGNYDQTFVVYGPVFLPNATQSKISEINYGGKILLPSSALNLLMQYNIPMPMLFKLTNMAVQRVTHCGVLEFSAPEGQAILPLWMMQQLGLDDGDTIRIESATLPKATFAKLKPMSLEFLNITNPKAVLEVELRKYACLTKNDRIPTSYAGQTLEFLVVDLKPANSVCIIECDVNLDFDPPEGYVEQPRQVTPAVTAKPPAPDASAFIGAGQKAGGSGGTGQNATSVFGGAGRRLDGKKKPSSSVSLSDGTGVSTSNAAPVANDLPAIPPVVVNEDYKPGRVSFLRYDYKRVDVLEKELREKEASKAGQPSNVFRGGNRTLRGAR.

Disordered stretches follow at residues 245–276 (FGGAGRRLDGKKKPSSSVSLSDGTGVSTSNAA) and 318–342 (EKEASKAGQPSNVFRGGNRTLRGAR). Residues 259–275 (SSSVSLSDGTGVSTSNA) are compositionally biased toward polar residues.

The protein belongs to the UFD1 family. Forms a complex composed of ubxn-3, ufd-1, npl-4.1 and cdc-48.1; within the complex interacts with cdc-48.1. Interacts with cdc-48.2. Interacts with npl-4.1 and/or npl-4.2.

The protein localises to the cytoplasm. It is found in the nucleus. In terms of biological role, functions at a post-ubiquitination step in the ubiquitin fusion degradation (UFD) pathway. In association with npl-4.1 and/or npl-4.2 and ATPase cdc-48.1 and/or cdc-48.2, involved in the cytoplasmic elimination of misfolded proteins exported from the ER. This pathway, known as ERAD, prevents the activation of the unfolded protein response (UPR) caused by the accumulation of misfolded proteins in the ER. During S phase and in association with npl-4.1 and/or npl-4.2, cdc-48.1 and/or cdc-48.2 and ubxn-3, ensures the degradation of DNA licensing factor cdt-1 after the initiation of DNA replication and thus the disassembly of the DNA replication CMG helicase complex by promoting the dissociation from chromatin of several of its components including cdc-45 and sld-5. Regulates ubxn-3 nuclear localization during S phase. The protein is Ubiquitin fusion degradation protein 1 homolog (ufd-1) of Caenorhabditis elegans.